The chain runs to 288 residues: Probable ketoamine kinase VV1_2562 (288 aa).

Residue 92-94 participates in ATP binding; the sequence is NFL. Aspartate 195 acts as the Proton acceptor in catalysis.

This sequence belongs to the fructosamine kinase family.

Its function is as follows. Ketoamine kinase that phosphorylates ketoamines on the third carbon of the sugar moiety to generate ketoamine 3-phosphate. The chain is Probable ketoamine kinase VV1_2562 from Vibrio vulnificus (strain CMCP6).